The primary structure comprises 7158 residues: MVGAPRFTQKPSIQQTPTGDLLMECHLEADPQPTIAWQHSGNLLEPSGRVVQTLTPLGGSLYKATLVIKEPNAGDGGAYKCTARNQLGESNANINLNFAGAGGDEAKSRGPSFVGKPRIIPKDGGALIVMECKVKSASTPVAKWMKDGVPLSMGGLYHAIFSDLGDQTYLCQLEIRGPSSSDAGQYRCNIRNDQGETNANLALNFEEPDPSERQERKRSTASPRPSSRGPGSRPSSPKKSMKSREGTPKRTLKPREGSPSKKLRSRTSTPVNEEVSQSESRRSSRTDKMEVDQVSGASKRKPDGLPPPGGDEKKLRAGSPSTRKSPSRKSASPTPSRKGSSAGGAASGTTGASASATSATSGGSASSDASRDKYTRPPIVLEASRSQTGRIGGSVVLEVQWQCHSSTIIEWYRDGTLVRNSSEYSQSFNGSIAKLQVNKLTEEKSGLYKCHAKCDYGEGQSSAMVKIEQSDVEEELMKHRKDAEDEYQKEEQKSQTLQAETKKRVARRSKSKSKSPAPQAKKSTTSESGRQEASEVEHKRSSSVRPDPDEESQLDEIPSSGLTIPEERRRELLGQVGESDDEVSESISELPSFAGGKPRRKTDSPPKQDDMFSRDTLLRKTTTSTKNESSTVEEKTKLRKTVKKVDGELDFKAMVKLKKVKKEEGGTTEKSGFPLDHADSTSSVLSQESRSRRGSNAPFAKDGLPEQPANPFAQLKKVKSGAGGLEKSDSMASLKKLDLKKGKIDDNSDGAFKVQLKKVVKKEVKESTISVKEKNGTESGIKTEFKMEKRERTTLQKYEKTDSDGSKKEDKPKKVSIAPVSTNKSSDDEPSTPRHHKEVEEKSTSEELKAKVAGRQVGQKRNGAQKPEEPKNLLSQIQLKKVTKKAHDDTNELEGIKLKKVTTVPKHVADDDSQSESESRRGSVFGELRRGSRAPRDSADNSRRDSIRRSSIDMRRESVQEILEKTSTPLVPSGASGSAPKIVEVPENVTVVENETAILTCKVSGSPAPTFRWFKGSREVISGGRFKHITDGKEHTVALALLKCRSQDEGPYTLTIENVHGTDSADVKLLVTSDNGLDFRAMLKHRESQAGFQKDGEGGGAGGGGGEKKPMTEAERRQSLFPGKKVEKWDIPLPEKTVQQQVDKICEWKCTYSRPNAKIRWYKDRKEIFSGGLKYKIVIEKNVCTLIINNPEVDDTGKYTCEANGVPTHAQLTVLEPPMKYSFLNPLPNTQEIYRTKQAVLTCKVNTPRAPLVWYRGSKAIQEGDPRFIIEKDAVGRCTLTIKEVEEDDQAEWTARITQDVFSKVQVYVEEPRHTFVVPMKSQKVNESDLATLETDVNDKDAEVVWWHDGKRIDIDGVKFKVESSNRKRRLIINGARIEDHGEYKCTTKDDRTMAQLIVDAKNKFIVALKDTEVIEKDDVTLMCQTKDTKTPGIWFRNGKQISSMPGGKFETQSRNGTHTLKIGKIEMNEADVYEIDQAGLRGSCNVTVLEAEKRPILNWKPKKIEAKAGEPCVVKVPFQIKGTRRGDPKAQILKNGKPIDEEMRKLVEVIIKDDVAEIVFKNPQLADTGKWALELGNSAGTALAPFELFVKDKPKPPKGPLETKNVTAEGLDLVWGTPDPDEGAPVKAYIIEMQEGRSGNWAKVGETKGTDFKVKDLKEHGEYKFRVKALNECGLSDPLTGESVLAKNPYGVPGKPKNMDAIDVDKDHCTLAWEPPEEDGGAPITGYIIERREKSEKDWHQVGQTKPDCCELTDKKVVEDKEYLYRVKAVNKAGPGDPCDHGKPIKMKAKKASPEFTGGGIKDLRLKVGETIKYDVPISGEPLPECLWVVNGKPLKAVGRVKMSSERGKHIMKIENAVRADSGKFTITLKNSSGSCDSTATVTVVGRPTPPKGPLDIADVCADGATLSWNPPDDDGGDPLTGYIVEAQDMDNKGKYIEVGKVDPNTTTLKVNGLRNKGNYKFRVKAVNNEGESEPLSADQYTQIKDPWDEPGKPGRPEITDFDADRIDIAWEPPHKDGGAPIEEYIVEVRDPDTKEWKEVKRVPDTNASISGLKEGKEYQFRVRAVNKAGPGQPSEPSEKQLAKPKFIPAWLKHDNLKSITVKAGATVRWEVKIGGEPIPEVKWFKGNQQLENGIQLTIDTRKNEHTILCIPSAMRSDVGEYRLTVKNSHGADEEKANLTVLDRPSKPNGPLEVSDVFEDNLNLSWKPPDDDGGEPIEYYEVEKLDTATGRWVPCAKVKDTKAHIDGLKKGQTYQFRVKAVNKEGASDALSTDKDTKAKNPYDEPGKTGTPDVVDWDADRVSLEWEPPKSDGGAPITQYVIEKKGKHGRDWQECGKVSGDQTNAEILGLKEGEEYQFRVKAVNKAGPGEASDPSRKVVAKPRNLKPWIDREAMKTITIKVGNDVEFDVPVRGEPPPKKEWIFNEKPVDDQKIRIESEDYKTRFVLRGATRKHAGLYTLTATNASGSDKHSVEVIVLGKPSSPLGPLEVSNVYEDRADLEWKVPEDDGGAPIDHYEIEKMDLATGRWVPCGRSETTKTTVPNLQPGHEYKFRVRAVNKEGESDPLTTNTAILAKNPYEVPGKVDKPELVDWDKDHVDLAWNAPDDGGAPIEAFVIEKKDKNGRWEEALVVPGDQKTATVPNLKEGEEYQFRISARNKAGTGDPSDPSDRVVAKPRNLAPRIHREDLSDTTVKVGATLKFIVHIDGEPAPDVTWSFNGKGIGESKAQIENEPYISRFALPKALRKQSGKYTITATNINGTDSVTINIKVKSKPTKPKGPIEVTDVFEDRATLDWKPPEDDGGEPIEFYEIEKMNTKDGIWVPCGRSGDTHFTVDSLNKGDHYKFRVKAVNSEGPSDPLETETDILAKNPFDRPDRPGRPEPTDWDSDHVDLKWDPPLSDGGAPIEEYQIEKRTKYGRWEPAITVPGGQTTATVPDLTPNEEYEFRVVAVNKGGPSDPSDASKAVIAKPRNLKPHIDRDALKNLTIKAGQSISFDVPVSGEPAPTVTWHWPDNREIRNGGRVKLDNPEYQSKLVVKQMERGDSGTFTIKAVNANGEDEATVKINVIDKPTSPNGPLDVSDVHGDHVTLNWRAPDDDGGIPIENYVIEKYDTASGRWVPAAKVAGDKTTAVVDGLIPGHEYKFRVAAVNAEGESDPLETFGTTLAKDPFDKPGKTNAPEITDWDKDHVDLEWKPPANDGGAPIEEYVVEMKDEFSPFWNDVAHVPAGQTNATVGNLKEGSKYEFRIRAKNKAGLGDPSDSASAVAKARNVPPVIDRNSIQEIKVKAGQDFSLNIPVSGEPTPTITWTFEGTPVESDDRMKLNNEDGKTKFHVKRALRSDTGTYIIKAENENGTDTAEVKVTVLDHPSSPRGPLDVTNIVKDGCDLAWKEPEDDGGAEISHYVIEKQDAATGRWTACGESKDTNFHVDDLTQGHEYKFRVKAVNRHGDSDPLEAREAIIAKDPFDRADKPGTPEIVDWDKDHADLKWTPPADDGGAPIEGYLVEMRTPSGDWVPAVTVGAGELTATVDGLKPGQTYQFRVKALNKAGESTPSDPSRTMVAKPRHLAPKINRDMFVAQRVKAGQTLNFDVNVEGEPAPKIEWFLNGSPLSSGGNTHIDNNTDNNTKLTTKSTARADSGKYKIVATNESGKDEHEVDVNILDIPGAPEGPLRHKDITKESVVLKWDEPLDDGGSPITNYVVEKQEDGGRWVPCGETSDTSLKVNKLSEGHEYKFRVKAVNRQGTSAPLTSDHAIVAKNPFDEPDAPTDVTPVDWDKDHVDLEWKPPANDGGAPIDAYIVEKKDKFGDWVECARVDGKTTKATADNLTPGETYQFRVKAVNKAGPGKPSDPTGNVVAKPRRMAPKLNLAGLLDLRIKAGTPIKLDIAFEGEPAPVAKWKANDATIDTGARADVTNTPTSSAIHIFSAVRGDTGVYKIIVENEHGKDTAQCNVTVLDVPGTPEGPLKIDEIHKEGCTLNWKPPTDNGGTDVLHYIVEKMDTSRGTWQEVGTFPDCTAKVNKLVPGKEYAFRVKAVNLQGESKPLEAEEPIIAKNQFDVPDPVDKPEVTDWDKDRIDIKWNPTANNGGAPVTGYIVEKKEKGSAIWTEAGKTPGTTFSADNLKPGVEYEFRVIAVNAAGPSDPSDPTDPQITKARYLKPKILTASRKIKIKAGFTHNLEVDFIGAPDPTATWTVGDSGAALAPELLVDAKSSTTSIFFPSAKRADSGNYKLKVKNELGEDEAIFEVIVQDRPSAPEGPLEVSDVTKDSCVLNWKPPKDDGGAEISNYVVEKRDTKTNTWVPVSAFVTGTSITVPKLTEGHEYEFRVMAENTFGRSDSLNTDEPVLAKDPFGTPGKPGRPEIVDTDNDHIDIKWDPPRDNGGSPVDHYDIERKDAKTGRWIKVNTSPVQGTAFSDTRVQKGHTYEYRVVAVNKAGPGQPSDSSAAATAKPMHEAPKFDLDLDGKEFRVKAGEPLVITIPFTASPQPDISWTKEGGKPLAGVETTDSQTKLVIPSTRRSDSGPVKIKAVNPYGEAEANIKITVIDKPGAPENITYPAVSRHTCTLNWDAPKDDGGAEIAGYKIEYQEVGSQIWDKVPGLISGTAYTVRGLEHGQQYRFRIRAENAVGLSDYCQGVPVVIKDPFDPPGAPSTPEITGYDTNQVSLAWNPPRDDGGSPILGYVVERFEKRGGGDWAPVKMPMVKGTECIVPGLHENETYQFRVRAVNAAGHGEPSNGSEPVTCRPYVEKPGAPDAPRVGKITKNSAELTWNRPLRDGGAPIDGYIVEKKKLGDNDWTRCNDKPVRDTAFEVKNLGEKEEYEFRVIAVNSAGEGEPSKPSDLVLIEEQPGRPIFDINNLKDITVRAGETIQIRIPYAGGNPKPIIDLFNGNSPIFENERTVVDVNPGEIVITTTGSKRSDAGPYKISATNKYGKDTCKLNVFVLDAPGKPTGPIRATDIQADAMTLSWRPPKDNGGDAITNYVVEKRTPGGDWVTVGHPVGTTLRVRNLDANTPYEFRVRAENQYGVGEPLETDDAIVAKNPFDTPGAPGQPEAVETSEEAITLQWTRPTSDGGAPIQGYVIEKREVGSTEWTKAAFGNILDTKHRVTGLTPKKTYEFRVAAYNAAGQGEYSVNSVPITADNAPTRPKINMGMLTRDILAYAGERAKILVPFAASPAPKVTFSKGENKISPTDPRVKVEYSDFLATLTIEKSELTDGGLYFVELENSQGSDSASIRLKVVDKPASPQHIRVEDIAPDCCTLYWMPPSSDGGSPITNYIVEKLDLRHSDGKWEKVSSFVRNLNYTVGGLIKDNRYRFRVRAETQYGVSEPCELADVVVAKYQFEVPNQPEAPTVRDKDSTWAELEWDPPRDGGSKIIGYQVQYRDTSSGRWINAKMDLSEQCHARVTGLRQNGEFEFRIIAKNAAGFSKPSPPSERCQLKSRFGPPGPPIHVGAKSIGRNHCTITWMAPLEDGGSKITGYNVEIREYGSTLWTVASDYNVREPEFTVDKLREFNDYEFRVVAINAAGKGIPSLPSGPIKIQESGGSRPQIVVKPEDTAQPYNRRAVFTCEAVGRPEPTARWLRNGRELPESSRYRFEASDGVYKFTIKEVWDIDAGEYTVEVSNPYGSDTATANLVVQAPPVIEKDVPNTILPSGDLVRLKIYFSGTAPFRHSLVLNREEIDMDHPTIRIVEFDDHILITIPALSVREAGRYEYTVSNDSGEATTGFWLNVTGLPEAPQGPLHISNIGPSTATLSWRPPVTDGGSKITSYVVEKRDLSKDEWVTVTSNVKDMNYIVTGLFENHEYEFRVSAQNENGIGAPLVSEHPIIARLPFDPPTSPLNLEIVQVGGDYVTLSWQRPLSDGGGRLRGYIVEKQEEEHDEWFRCNQNPSPPNNYNVPNLIDGRKYRYRVFAVNDAGLSDLAELDQTLFQASGSGEGPKIVSPLSDLNEEVGRCVTFECEISGSPRPEYRWFKGCKELVDTSKYTLINKGDKQVLIINDLTSDDADEYTCRATNSSGTRSTRANLRIKTKPRVFIPPKYHGGYEAQKGETIELKIPYKAYPQGEARWTKDGEKIENNSKFSITTDDKFATLRISNASREDYGEYRVVVENSVGSDSGTVNVTVADVPEPPRFPIIENILDEAVILSWKPPALDGGSLVTNYTIEKREAMGGSWSPCAKSRYTYTTIEGLRAGKQYEFRIIAENKHGQSKPCEPTAPVLIPGDERKRRRGYDVDEQGKIVRGKGTVSSNYDNYVFDIWKQYYPQPVEIKHDHVLDHYDIHEELGTGAFGVVHRVTERATGNNFAAKFVMTPHESDKETVRKEIQTMSVLRHPTLVNLHDAFEDDNEMVMIYEFMSGGELFEKVADEHNKMSEDEAVEYMRQVCKGLCHMHENNYVHLDLKPENIMFTTKRSNELKLIDFGLTAHLDPKQSVKVTTGTAEFAAPEVAEGKPVGYYTDMWSVGVLSYILLSGLSPFGGENDDETLRNVKSCDWNMDDSAFSGISEDGKDFIRKLLLADPNTRMTIHQALEHPWLTPGNAPGRDSQIPSSRYTKIRDSIKTKYDAWPEPLPPLGRISNYSSLRKHRPQEYSIRDAFWDRSEAQPRFIVKPYGTEVGEGQSANFYCRVIASSPPVVTWHKDDRELKQSVKYMKRYNGNDYGLTINRVKGDDKGEYTVRAKNSYGTKEEIVFLNVTRHSEPLKFEPLEPMKKAPSPPRVEEFKERRSAPFFTFHLRNRLIQKNHQCKLTCSLQGNPNPTIEWMKDGHPVDEDRVQVSFRSGVCSLEIFNARVDDAGTYTVTATNDLGVDVSECVLTVQTKGGEPIPRVSSFRPRRAYDTLSTGTDVERSHSYADMRRRSLIRDVSPDVRSAADDLKTKITNELPSFTAQLSDSETEVGGSAEFSAAVSGQPEPLIEWLHNGERISESDSRFRASYVAGKATLRISDAKKSDEGQYLCRASNSAGQEQTRATLTVKGDQPLLNGHAGQAVESELRVTKHLGGEIVNNGESVTFEARVQGTPEEVLWMRNGQELTNGDKTSISQDGETLSFTINSADASDAGHYQLEVRSKGTNLVSVASLVVVGEKADPPVTRLPSSVSAPLGGSTAFTIEFENVEGLTVQWFRGSEKIEKNERVKSVKTGNTFKLDIKNVEQDDDGIYVAKVVKEKKAIAKYAAALLLV.

2 Ig-like domains span residues 5–97 (PRFT…INLN) and 111–204 (PSFV…LALN). 2 cysteine pairs are disulfide-bonded: C25/C81 and C132/C188. 4 disordered regions span residues 204–381 (NFEE…PIVL), 473–639 (EEEL…TKLR), 658–732 (KKVK…DSMA), and 763–955 (EVKE…IDMR). Over residues 220-238 (TASPRPSSRGPGSRPSSPK) the composition is skewed to low complexity. Composition is skewed to basic and acidic residues over residues 242–259 (KSREGTPKRTLKPREGSP) and 279–291 (ESRRSSRTDKMEV). Composition is skewed to low complexity over residues 319-340 (SPSTRKSPSRKSASPTPSRKGS) and 347-368 (SGTTGASASATSATSGGSASSD). One can recognise an Ig-like 3 domain in the interval 377 to 466 (PPIVLEASRS…GEGQSSAMVK (90 aa)). Basic residues predominate over residues 504 to 513 (RVARRSKSKS). Over residues 514–523 (KSPAPQAKKS) the composition is skewed to low complexity. 2 stretches are compositionally biased toward basic and acidic residues: residues 529–540 (GRQEASEVEHKR) and 601–618 (KTDSPPKQDDMFSRDTLL). The segment covering 620 to 630 (KTTTSTKNESS) has biased composition (low complexity). A Kelch 1 repeat occupies 718–764 (VKSGAGGLEKSDSMASLKKLDLKKGKIDDNSDGAFKVQLKKVVKKEV). Composition is skewed to basic and acidic residues over residues 763–813 (EVKE…DKPK), 837–850 (KEVEEKSTSEELKA), 885–897 (KAHDDTNELEGIK), and 917–955 (SESRRGSVFGELRRGSRAPRDSADNSRRDSIRRSSIDMR). Residues 980 to 1072 (PKIVEVPENV…DSADVKLLVT (93 aa)) enclose the Ig-like 4 domain. A disordered region spans residues 1088–1118 (SQAGFQKDGEGGGAGGGGGEKKPMTEAERRQ). A compositionally biased stretch (basic and acidic residues) spans 1106–1118 (GEKKPMTEAERRQ). 3 Ig-like domains span residues 1122 to 1213 (PGKK…AQLT), 1217 to 1306 (PPMK…SKVQ), and 1312 to 1398 (PRHT…AQLI). An intrachain disulfide couples C1150 to C1201. Fibronectin type-III domains lie at 1598–1690 (PKGP…AKNP), 1696–1791 (KPKN…MKAK), 1891–1988 (PPKG…IKDP), 1994–2087 (KPGR…AKPK), 2189–2282 (PNGP…AKNP), 2288–2383 (KTGT…AKPR), 2483–2576 (PLGP…AKNP), and 2579–2675 (VPGK…AKPR). The stretch at 2014–2058 (PPHKDGGAPIEEYIVEVRDPDTKEWKEVKRVPDTNASISGLKEGK) is one Kelch 2 repeat. Residues 2086–2181 (PKFIPAWLKH…GADEEKANLT (96 aa)) form the Ig-like 8 domain. A Kelch 3 repeat occupies 2207–2253 (WKPPDDDGGEPIEYYEVEKLDTATGRWVPCAKVKDTKAHIDGLKKGQ). The segment covering 2266 to 2287 (GASDALSTDKDTKAKNPYDEPG) has biased composition (basic and acidic residues). The tract at residues 2266-2295 (GASDALSTDKDTKAKNPYDEPGKTGTPDVV) is disordered. The Kelch 4 repeat unit spans residues 2502–2547 (KVPEDDGGAPIDHYEIEKMDLATGRWVPCGRSETTKTTVPNLQPGH). In terms of domain architecture, Ig-like 9 spans 2679 to 2763 (PRIHREDLSD…TNINGTDSVT (85 aa)). 2 consecutive Fibronectin type-III domains span residues 2775–2868 (PKGP…AKNP) and 2874–2968 (RPGR…AKPR). The stretch at 2793-2839 (WKPPEDDGGEPIEFYEIEKMNTKDGIWVPCGRSGDTHFTVDSLNKGD) is one Kelch 5 repeat. A disordered region spans residues 2849–2901 (NSEGPSDPLETETDILAKNPFDRPDRPGRPEPTDWDSDHVDLKWDPPLSDGGA). Positions 2868-2892 (PFDRPDRPGRPEPTDWDSDHVDLKW) are enriched in basic and acidic residues. The region spanning 2972 to 3062 (PHIDRDALKN…GEDEATVKIN (91 aa)) is the Ig-like 10 domain. Fibronectin type-III domains are found at residues 3070–3165 (PNGP…AKDP) and 3171–3265 (KTNA…AKAR). The stretch at 3089 to 3134 (RAPDDDGGIPIENYVIEKYDTASGRWVPAAKVAGDKTTAVVDGLIP) is one Kelch 6 repeat. Residues 3268–3358 (PPVIDRNSIQ…GTDTAEVKVT (91 aa)) enclose the Ig-like 11 domain. Fibronectin type-III domains follow at residues 3365–3459 (SPRG…AKDP) and 3465–3559 (KPGT…AKPR). One copy of the Kelch 7 repeat lies at 3384–3430 (WKEPEDDGGAEISHYVIEKQDAATGRWTACGESKDTNFHVDDLTQGH). The Ig-like 12 domain occupies 3563-3653 (PKINRDMFVA…GKDEHEVDVN (91 aa)). Fibronectin type-III domains lie at 3661–3753 (PEGP…AKNP), 3759–3853 (APTD…AKPR), 3954–4047 (PEGP…AKNQ), 4053–4146 (PVDK…TKAR), 4246–4340 (PEGP…AKDP), and 4346–4440 (KPGR…TAKP). A Kelch 8 repeat occupies 3972–4018 (WKPPTDNGGTDVLHYIVEKMDTSRGTWQEVGTFPDCTAKVNKLVPGK). 2 Kelch repeats span residues 4265–4310 (KPPK…LTEG) and 4365–4410 (DPPR…RVQK). An Ig-like 13 domain is found at 4445-4531 (PKFDLDLDGK…GEAEANIKIT (87 aa)). Fibronectin type-III domains follow at residues 4538–4631 (APEN…IKDP), 4637–4733 (APST…CRPY), 4739–4834 (APDA…IEEQ), 4936–5028 (PTGP…AKNP), 5034–5129 (APGQ…ADNA), 5231–5326 (SPQH…VAKY), 5333–5427 (QPEA…LKSR), and 5430–5528 (PPGP…IQES). The stretch at 4557-4602 (DAPKDDGGAEIAGYKIEYQEVGSQIWDKVPGLISGTAYTVRGLEHG) is one Kelch 11 repeat. One copy of the Kelch 12 repeat lies at 5287 to 5335 (LNYTVGGLIKDNRYRFRVRAETQYGVSEPCELADVVVAKYQFEVPNQPE). Positions 5533–5621 (PQIVVKPEDT…GSDTATANLV (89 aa)) constitute an Ig-like 14 domain. Fibronectin type-III domains are found at residues 5723 to 5817 (PQGP…ARLP) and 5823 to 5919 (SPLN…ASGS). Residues 5742 to 5787 (RPPVTDGGSKITSYVVEKRDLSKDEWVTVTSNVKDMNYIVTGLFEN) form a Kelch 13 repeat. 2 Ig-like domains span residues 5923–6011 (PKIV…ANLR) and 6016–6107 (PRVF…VNVT). C5944 and C5995 are oxidised to a cystine. A Fibronectin type-III 31 domain is found at 6114 to 6207 (PPRFPIIENI…PTAPVLIPGD (94 aa)). The Protein kinase domain occupies 6261–6516 (YDIHEELGTG…IHQALEHPWL (256 aa)). Residues 6267-6275 (LGTGAFGVV) and K6290 contribute to the ATP site. The Proton acceptor role is filled by D6382. The segment at 6517–6581 (TPGNAPGRDS…SIRDAFWDRS (65 aa)) is C-terminal regulatory domain (CDR). Ig-like domains follow at residues 6585–6673 (PRFI…VFLN), 6696–6795 (PRVE…CVLT), 6863–6952 (PSFT…ATLT), 6958–7059 (PLLN…ASLV), and 7067–7149 (PPVT…KAIA).

The protein belongs to the protein kinase superfamily. CAMK Ser/Thr protein kinase family. May interact (via protein kinase and CRD domains) with mak-1 (via protein kinase domain). It depends on Mg(2+) as a cofactor. Post-translationally, phosphorylated by mak-1 on the protein kinase domain and/or CDR domain in vitro. Expressed in body wall, anal, vulval, and pharyngeal muscles (at protein level).

It is found in the cytoplasm. The protein localises to the myofibril. Its subcellular location is the sarcomere. The protein resides in the a band. It catalyses the reaction L-seryl-[protein] + ATP = O-phospho-L-seryl-[protein] + ADP + H(+). The catalysed reaction is L-threonyl-[protein] + ATP = O-phospho-L-threonyl-[protein] + ADP + H(+). Its activity is regulated as follows. Forces generated by the contraction/relaxation cycles of muscle activity separate the regulatory domain from the catalytic core, activating the enzyme. At rest, the kinase domain is in a closed conformation. The active site is occupied by the autoinhibitory region (CDR), which makes extensive contact with the catalytic site, blocking substrate binding. At low forces the regulatory tail will unravel reversibly and expose the active site to its substrates, potentially stabilized by binding of Ca/CALM. At high forces the kinase begins to unfold and the integrity of the active site is disrupted. Functionally, regulator of muscle contraction and relaxation. Senses mechanical strain that occurs during muscle activity by unfolding in clearly resolvable steps at differing forces. Plays a role in the organization of sarcomeres in body wall muscles. The chain is Twitchin from Caenorhabditis elegans.